A 750-amino-acid chain; its full sequence is Catalase A (750 aa).

The interval 30–49 is disordered; the sequence is ERDTADAHTQQPLTTDHGVR. Catalysis depends on residues His-93 and Asn-166. Tyr-380 is a binding site for heme.

Belongs to the catalase family. Heme serves as cofactor.

It is found in the peroxisome matrix. It catalyses the reaction 2 H2O2 = O2 + 2 H2O. Functionally, catalyzes the degradation of hydrogen peroxide (H(2)O(2)) generated by peroxisomal oxidases to water and oxygen, thereby protecting cells from the toxic effects of hydrogen peroxide. In Aspergillus fumigatus (strain ATCC MYA-4609 / CBS 101355 / FGSC A1100 / Af293) (Neosartorya fumigata), this protein is Catalase A (catA).